The following is a 214-amino-acid chain: MGRRPARCYRYCKNKPYPKSRFCRGVPDAKIRIFDLGRKKAKVDEFPLCGHMVSDEYEQLSSEALEAARICANKYMVKSCGKDGFHIRVRLHPFHVIRINKMLSCAGADRLQTGMRGAFGKPQGTVARVHIGQVIMSIRTKLQNKEHVIEALRRAKFKFPGRQKIHISKKWGFTKFNADEFEDMVAEKRLIPDGCGVKYTPNRGPLDKWRALHS.

Residue R32 is modified to Citrulline. Residue K175 forms a Glycyl lysine isopeptide (Lys-Gly) (interchain with G-Cter in SUMO2) linkage. A Glycyl lysine isopeptide (Lys-Gly) (interchain with G-Cter in ubiquitin) cross-link involves residue K188.

The protein belongs to the universal ribosomal protein uL16 family. Component of the large ribosomal subunit. Mature ribosomes consist of a small (40S) and a large (60S) subunit. The 40S subunit contains about 33 different proteins and 1 molecule of RNA (18S). The 60S subunit contains about 49 different proteins and 3 molecules of RNA (28S, 5.8S and 5S). Post-translationally, citrullinated by PADI4. In terms of processing, ufmylated by UFL1.

The protein localises to the cytoplasm. Component of the large ribosomal subunit. Plays a role in the formation of actively translating ribosomes. May play a role in the embryonic brain development. The protein is Large ribosomal subunit protein uL16 of Pongo abelii (Sumatran orangutan).